The sequence spans 544 residues: Terpene synthase 9 (544 aa).

Residues Asp-296, Asp-300, and Glu-449 each contribute to the Mg(2+) site. A DDXXD motif motif is present at residues 296–300 (DDTFD).

This sequence belongs to the terpene synthase family. Tpsa subfamily. The cofactor is Mg(2+). It depends on Mn(2+) as a cofactor.

The catalysed reaction is (2E,6E)-farnesyl diphosphate = (1E,4E)-germacrene B + diphosphate. It carries out the reaction (2E)-geranyl diphosphate = terpinolene + diphosphate. The enzyme catalyses (2E)-geranyl diphosphate = limonene + diphosphate. It catalyses the reaction (2E)-geranyl diphosphate = beta-myrcene + diphosphate. The catalysed reaction is (2Z,6Z)-farnesyl diphosphate = germacrene A + diphosphate. It carries out the reaction (2Z,6Z)-farnesyl diphosphate = alpha-humulene + diphosphate. It participates in secondary metabolite biosynthesis; terpenoid biosynthesis. Its function is as follows. Sesquiterpene synthase involved in the biosynthesis of volatile compounds. Mediates the conversion of (2E,6E)-farnesyl diphosphate (FPP) into (1E,4E)-germacrene B, but also smaller amounts of germacrene A and C, and of (2Z,6Z)-farnesyl diphosphate ((ZZ)-FPP) into alpha-humulene, germacrene A and germacrene B. Can act with a low efficiency as a monoterpene synthase with geranyl diphosphate (GPP) as substrate, thus producing beta-myrcene, limonene and terpinolene. This chain is Terpene synthase 9, found in Solanum habrochaites (Wild tomato).